A 175-amino-acid polypeptide reads, in one-letter code: SsrA-binding protein (175 aa).

Disordered stretches follow at residues 1 to 29 (MTRN…ERDA) and 152 to 175 (KRET…SRKS).

It belongs to the SmpB family.

The protein resides in the cytoplasm. Functionally, required for rescue of stalled ribosomes mediated by trans-translation. Binds to transfer-messenger RNA (tmRNA), required for stable association of tmRNA with ribosomes. tmRNA and SmpB together mimic tRNA shape, replacing the anticodon stem-loop with SmpB. tmRNA is encoded by the ssrA gene; the 2 termini fold to resemble tRNA(Ala) and it encodes a 'tag peptide', a short internal open reading frame. During trans-translation Ala-aminoacylated tmRNA acts like a tRNA, entering the A-site of stalled ribosomes, displacing the stalled mRNA. The ribosome then switches to translate the ORF on the tmRNA; the nascent peptide is terminated with the 'tag peptide' encoded by the tmRNA and targeted for degradation. The ribosome is freed to recommence translation, which seems to be the essential function of trans-translation. The sequence is that of SsrA-binding protein from Koribacter versatilis (strain Ellin345).